Reading from the N-terminus, the 357-residue chain is Peptide chain release factor 1 (357 aa).

Glutamine 234 is subject to N5-methylglutamine.

Belongs to the prokaryotic/mitochondrial release factor family. Methylated by PrmC. Methylation increases the termination efficiency of RF1.

It is found in the cytoplasm. In terms of biological role, peptide chain release factor 1 directs the termination of translation in response to the peptide chain termination codons UAG and UAA. The sequence is that of Peptide chain release factor 1 from Arthrobacter sp. (strain FB24).